The sequence spans 1313 residues: Inter-alpha-trypsin inhibitor heavy chain H6 (1313 aa).

The N-terminal stretch at 1 to 23 (MSGWRYLICVSFLLTILLELTYQ) is a signal peptide. In terms of domain architecture, VIT spans 24 to 150 (GPPVPASSST…EVTFSLAYEE (127 aa)). 4 N-linked (GlcNAc...) asparagine glycosylation sites follow: Asn83, Asn374, Asn540, and Asn594. Positions 283-469 (NVVFVIDVSS…LQLKGLYEEI (187 aa)) constitute a VWFA domain. Disordered stretches follow at residues 612-644 (QPKQ…HGLG), 783-817 (HSKP…TLQV), 856-928 (LKPS…EPLP), and 959-983 (PSRP…SPPN). The segment covering 623 to 640 (QTSTSAGPDTIMPSSSSR) has biased composition (polar residues). Polar residues predominate over residues 864 to 875 (QISTSISLSKPE). Residues 876–888 (TPNPHMPQTPLPP) are compositionally biased toward pro residues. Positions 907–921 (TISSSTGPSSTTTTS) are enriched in low complexity. Asn971 and Asn1231 each carry an N-linked (GlcNAc...) asparagine glycan.

This sequence belongs to the ITIH family.

Its subcellular location is the secreted. The protein is Inter-alpha-trypsin inhibitor heavy chain H6 (ITIH6) of Homo sapiens (Human).